A 588-amino-acid polypeptide reads, in one-letter code: Synaptotagmin-3 (588 aa).

The Vesicular portion of the chain corresponds to 1–54 (MSGDYEDDLCRRALILVSDLCARIRDADTNDRCQEFNELRIRGYPRGPDADISV). The segment at 10 to 34 (CRRALILVSDLCARIRDADTNDRCQ) is cysteine motif. A helical transmembrane segment spans residues 55–75 (SLLSVIVTFCGIVLLGVSLFV). Over 76 to 588 (SWKLCWVPWR…KGLSEKENSE (513 aa)) the chain is Cytoplasmic. Disordered regions lie at residues 129-161 (GGPH…PEPS), 183-222 (PSQT…VTSL), and 238-257 (QTLT…ALPL). Low complexity predominate over residues 183–205 (PSQTSPELPSEGGTGSGLLLLPP). The span at 213 to 222 (AQSHQQVTSL) shows a compositional bias: polar residues. R286 carries the omega-N-methylarginine modification. C2 domains are found at residues 297 to 418 (PCGR…PLWR) and 429 to 563 (DLGE…EHWH). Residues D328, D334, D386, F387, D388, S391, D394, D460, D466, D520, and D522 each contribute to the Ca(2+) site.

Belongs to the synaptotagmin family. In terms of assembly, homodimer; disulfide-linked via the cysteine motif. Can also form heterodimers with SYT6, SYT9 and SYT10. Requires Ca(2+) as cofactor. As to expression, brain, various endocrine tissues and hormone-secreting clonal cells.

The protein resides in the cell membrane. It localises to the cytoplasmic vesicle. Its subcellular location is the secretory vesicle membrane. Ca(2+) sensor involved in Ca(2+)-dependent exocytosis of secretory vesicles through Ca(2+) and phospholipid binding to the C2 domain. Ca(2+) induces binding of the C2-domains to phospholipid membranes and to assembled SNARE-complexes; both actions contribute to triggering exocytosis. Plays a role in dendrite formation by melanocytes. This chain is Synaptotagmin-3 (Syt3), found in Rattus norvegicus (Rat).